Here is a 54-residue protein sequence, read N- to C-terminus: H-bracotoxin-Cf4 (54 aa).

A signal peptide spans 1–21; it reads MSKLFIFFLLVALLAFVSSEA. Cystine bridges form between Cys24-Cys39, Cys31-Cys43, and Cys38-Cys53.

Expressed by the venom duct.

It is found in the secreted. In terms of biological role, this endoparasitoid wasp peptide has a role in disruption of the cellular host immune response, since it reduces the capacity of D.saccharalis hemocytes to encapsulate foreign bodies. On the other hand, it shows no effect on the humoral immune response, since it has no effect on phenoloxidase activity. This chain is H-bracotoxin-Cf4, found in Cotesia flavipes (Parasitic wasp).